The following is a 202-amino-acid chain: Transcriptional regulator SdrP (202 aa).

Residues 117-189 form the HTH crp-type domain; the sequence is QRLKNRMAAA…YGKIQLLDLK (73 aa). The H-T-H motif DNA-binding region spans 149-168; that stretch reads HDELAAAVGSVRETVTKVIG.

In terms of assembly, homodimer.

Its function is as follows. Activates transcription. The consensus DNA-binding site of this transcriptional regulator is 5'-WWGTGAN(5-7)ACACWW-3' in which W is A or T and N is G, A, T or C. Regulated genes include those encoding proteins involved in nutrient and energy supply, redox control and polyadenylation of mRNA. Also regulates genes involved in oxidative stress response such as genes encoding manganese superoxide dismutase and catalase, and genes encoding a protein involved in nucleotide excision repair of damaged DNA and putative proteins involved in redox control, protein degradation and transcriptional regulation. The polypeptide is Transcriptional regulator SdrP (Thermus thermophilus (strain ATCC 27634 / DSM 579 / HB8)).